Reading from the N-terminus, the 985-residue chain is UPF0182 protein Cgl0786/cg0896 (985 aa).

7 helical membrane-spanning segments follow: residues 19–39 (VTWI…SVGF), 63–83 (IVLF…AGYF), 115–135 (VMVI…QRSW), 176–196 (SMML…MGGI), 215–235 (TQLA…YWLD), 262–282 (KIIL…AIFL), and 290–310 (LAVV…PLML). Residues 904-944 (KEAQDIEEVDGTATTPSTDETDTDTDQPATETPTAPVSEAE) form a disordered region. A compositionally biased stretch (low complexity) spans 929 to 939 (DQPATETPTAP).

This sequence belongs to the UPF0182 family.

Its subcellular location is the cell membrane. The polypeptide is UPF0182 protein Cgl0786/cg0896 (Corynebacterium glutamicum (strain ATCC 13032 / DSM 20300 / JCM 1318 / BCRC 11384 / CCUG 27702 / LMG 3730 / NBRC 12168 / NCIMB 10025 / NRRL B-2784 / 534)).